Reading from the N-terminus, the 130-residue chain is MAKTVKKSGPKKAKRNVPNGVAHIQSTFNNTIVSITDTTGEVISWSSAGASGFKGARKGTPFAAQTAAEAAARRALDQGMRQIEVLVRGPGSGRETAIRALQVAGLEITLIRDVTPLPHNGCRRPKRRRV.

The protein belongs to the universal ribosomal protein uS11 family. As to quaternary structure, part of the 30S ribosomal subunit. Interacts with proteins S7 and S18. Binds to IF-3.

Located on the platform of the 30S subunit, it bridges several disparate RNA helices of the 16S rRNA. Forms part of the Shine-Dalgarno cleft in the 70S ribosome. In Synechococcus sp. (strain WH7803), this protein is Small ribosomal subunit protein uS11.